Reading from the N-terminus, the 55-residue chain is Large ribosomal subunit protein bL33 (55 aa).

Belongs to the bacterial ribosomal protein bL33 family.

This Leifsonia xyli subsp. xyli (strain CTCB07) protein is Large ribosomal subunit protein bL33.